The chain runs to 193 residues: Probable GTP-binding protein EngB (193 aa).

One can recognise an EngB-type G domain in the interval 20–193; it reads GVPEVAFAGR…ELAHEISRCI (174 aa). GTP contacts are provided by residues 28–35, 55–59, 73–76, 140–143, and 171–176; these read GRSNVGKS, GSTRQ, DLPG, TKAD, and IMWVSS. Mg(2+) is bound by residues serine 35 and threonine 57.

This sequence belongs to the TRAFAC class TrmE-Era-EngA-EngB-Septin-like GTPase superfamily. EngB GTPase family. Mg(2+) is required as a cofactor.

Its function is as follows. Necessary for normal cell division and for the maintenance of normal septation. In Anaplasma phagocytophilum (strain HZ), this protein is Probable GTP-binding protein EngB.